Here is a 465-residue protein sequence, read N- to C-terminus: Iron-sulfur cluster assembly SufBD family protein SSP1857 (465 aa).

The protein belongs to the iron-sulfur cluster assembly SufBD family.

The sequence is that of Iron-sulfur cluster assembly SufBD family protein SSP1857 from Staphylococcus saprophyticus subsp. saprophyticus (strain ATCC 15305 / DSM 20229 / NCIMB 8711 / NCTC 7292 / S-41).